Here is a 473-residue protein sequence, read N- to C-terminus: FAD-dependent urate hydroxylase (473 aa).

The protein belongs to the HpyO family. As to quaternary structure, homodimer. The cofactor is FAD.

The catalysed reaction is urate + NADH + O2 + H(+) = 5-hydroxyisourate + NAD(+) + H2O. It catalyses the reaction urate + NADPH + O2 + H(+) = 5-hydroxyisourate + NADP(+) + H2O. It functions in the pathway purine metabolism; urate degradation. Catalyzes the hydroxylation of urate to 5-hydroxyisourate (HIU). Is likely to be involved in the urate degradation pathway to allantoin. Is slightly more efficient (about 2.6 times) with NADPH than NADH as the electron donor. The polypeptide is FAD-dependent urate hydroxylase (Xanthomonas campestris pv. campestris (strain ATCC 33913 / DSM 3586 / NCPPB 528 / LMG 568 / P 25)).